The chain runs to 104 residues: ATP-dependent Clp protease adapter protein ClpS (104 aa).

Belongs to the ClpS family. Binds to the N-terminal domain of the chaperone ClpA.

In terms of biological role, involved in the modulation of the specificity of the ClpAP-mediated ATP-dependent protein degradation. The polypeptide is ATP-dependent Clp protease adapter protein ClpS (Neisseria gonorrhoeae (strain ATCC 700825 / FA 1090)).